The chain runs to 392 residues: Phosphopentomutase (392 aa).

The Mn(2+) site is built by Asp-13, Asp-286, His-291, Asp-327, His-328, and His-339.

It belongs to the phosphopentomutase family. Mn(2+) is required as a cofactor.

The protein resides in the cytoplasm. It carries out the reaction 2-deoxy-alpha-D-ribose 1-phosphate = 2-deoxy-D-ribose 5-phosphate. The enzyme catalyses alpha-D-ribose 1-phosphate = D-ribose 5-phosphate. It functions in the pathway carbohydrate degradation; 2-deoxy-D-ribose 1-phosphate degradation; D-glyceraldehyde 3-phosphate and acetaldehyde from 2-deoxy-alpha-D-ribose 1-phosphate: step 1/2. Its function is as follows. Isomerase that catalyzes the conversion of deoxy-ribose 1-phosphate (dRib-1-P) and ribose 1-phosphate (Rib-1-P) to deoxy-ribose 5-phosphate (dRib-5-P) and ribose 5-phosphate (Rib-5-P), respectively. The polypeptide is Phosphopentomutase (Oceanobacillus iheyensis (strain DSM 14371 / CIP 107618 / JCM 11309 / KCTC 3954 / HTE831)).